We begin with the raw amino-acid sequence, 94 residues long: Large ribosomal subunit protein bL31 (94 aa).

A disordered region spans residues 64-94 (KYGMANPDEDSTKNTKSSKKETSEDSSSKGS). The span at 73-94 (DSTKNTKSSKKETSEDSSSKGS) shows a compositional bias: basic and acidic residues.

Belongs to the bacterial ribosomal protein bL31 family. Type A subfamily. As to quaternary structure, part of the 50S ribosomal subunit.

In terms of biological role, binds the 23S rRNA. This is Large ribosomal subunit protein bL31 from Prochlorococcus marinus (strain SARG / CCMP1375 / SS120).